Consider the following 147-residue polypeptide: Deoxyuridine 5'-triphosphate nucleotidohydrolase (147 aa).

Substrate is bound by residues 67–69, N80, and 84–86; these read RSG and TID.

Belongs to the dUTPase family. The cofactor is Mg(2+).

The catalysed reaction is dUTP + H2O = dUMP + diphosphate + H(+). It functions in the pathway pyrimidine metabolism; dUMP biosynthesis; dUMP from dCTP (dUTP route): step 2/2. This enzyme is involved in nucleotide metabolism: it produces dUMP, the immediate precursor of thymidine nucleotides and it decreases the intracellular concentration of dUTP so that uracil cannot be incorporated into DNA. The chain is Deoxyuridine 5'-triphosphate nucleotidohydrolase from Anaeromyxobacter dehalogenans (strain 2CP-1 / ATCC BAA-258).